The following is a 106-amino-acid chain: Follitropin subunit beta (106 aa).

Intrachain disulfides connect cysteine 1-cysteine 49, cysteine 15-cysteine 64, cysteine 18-cysteine 102, cysteine 26-cysteine 80, cysteine 30-cysteine 82, and cysteine 85-cysteine 92. N-linked (GlcNAc...) asparagine glycosylation is found at asparagine 5 and asparagine 22.

The protein belongs to the glycoprotein hormones subunit beta family. Heterodimer. The active follitropin is a heterodimer composed of an alpha chain/CGA shared with other hormones and a unique beta chain/FSHB shown here.

It localises to the secreted. Together with the alpha chain CGA constitutes follitropin, the follicle-stimulating hormone, and provides its biological specificity to the hormone heterodimer. Binds FSHR, a G protein-coupled receptor, on target cells to activate downstream signaling pathways. Follitropin is involved in follicle development and spermatogenesis in reproductive organs. The protein is Follitropin subunit beta (FSHB) of Struthio camelus (Common ostrich).